A 296-amino-acid chain; its full sequence is Acetaldehyde dehydrogenase (296 aa).

15–18 (SGNI) contacts NAD(+). Cys132 serves as the catalytic Acyl-thioester intermediate. Residues 164 to 172 (SAGPATRAN) and Asn274 each bind NAD(+).

It belongs to the acetaldehyde dehydrogenase family. In terms of assembly, interacts with MhpE.

It catalyses the reaction acetaldehyde + NAD(+) + CoA = acetyl-CoA + NADH + H(+). Its pathway is aromatic compound metabolism; 3-phenylpropanoate degradation. In terms of biological role, catalyzes the conversion of acetaldehyde to acetyl-CoA, using NAD(+) and coenzyme A. Is the final enzyme in the meta-cleavage pathway for the degradation of aromatic compounds. In Pectobacterium atrosepticum (strain SCRI 1043 / ATCC BAA-672) (Erwinia carotovora subsp. atroseptica), this protein is Acetaldehyde dehydrogenase.